A 917-amino-acid polypeptide reads, in one-letter code: Protein FAN (917 aa).

The region spanning 176 to 247 is the GRAM domain; it reads RLARTSFDKN…QDVRRIYKRR (72 aa). Positions 189-286 constitute a BEACH-type PH domain; that stretch reads NISEKLHMEC…DRDDLYFYIA (98 aa). In terms of domain architecture, BEACH spans 290 to 575; that stretch reads EHHVAEHTAE…QLFVTPHPRR (286 aa). WD repeat units follow at residues 628–658, 670–700, 712–740, 761–791, 803–833, and 884–914; these read IHKE…KMFS, FSNM…YFYS, GHDD…KVWS, EHDV…NIWD, CHSG…NVID, and GHTG…IFWK.

As to expression, ubiquitous.

Its function is as follows. Couples the p55 TNF-receptor (TNF-R55 / TNFR1) to neutral sphingomyelinase (N-SMASE). Specifically binds to the N-smase activation domain of TNF-R55. May regulate ceramide production by N-SMASE. The protein is Protein FAN (NSMAF) of Homo sapiens (Human).